A 69-amino-acid polypeptide reads, in one-letter code: Ribosome modulation factor (69 aa).

It belongs to the ribosome modulation factor family.

Its subcellular location is the cytoplasm. In terms of biological role, during stationary phase, converts 70S ribosomes to an inactive dimeric form (100S ribosomes). This is Ribosome modulation factor from Hahella chejuensis (strain KCTC 2396).